Here is a 1022-residue protein sequence, read N- to C-terminus: Probable beta-galactosidase B (1022 aa).

Positions 1–20 (MARFPQLLFLLLASIGLLSA) are cleaved as a signal peptide. An N-linked (GlcNAc...) asparagine glycan is attached at Asn23. Tyr90 contributes to the substrate binding site. An N-linked (GlcNAc...) asparagine glycan is attached at Asn100. 4 residues coordinate substrate: Asn135, Ala136, Glu137, and Asn195. Glu196 (proton donor) is an active-site residue. The N-linked (GlcNAc...) asparagine glycan is linked to Asn211. Position 265 (Tyr265) interacts with substrate. An intrachain disulfide couples Cys271 to Cys324. Catalysis depends on Glu308, which acts as the Nucleophile. Tyr373 is a substrate binding site. N-linked (GlcNAc...) asparagine glycans are attached at residues Asn411, Asn456, Asn541, Asn554, Asn626, Asn777, Asn790, Asn832, Asn880, and Asn881.

Belongs to the glycosyl hydrolase 35 family.

It localises to the secreted. It carries out the reaction Hydrolysis of terminal non-reducing beta-D-galactose residues in beta-D-galactosides.. Its function is as follows. Cleaves beta-linked terminal galactosyl residues from gangliosides, glycoproteins, and glycosaminoglycans. This chain is Probable beta-galactosidase B (lacB), found in Aspergillus terreus (strain NIH 2624 / FGSC A1156).